The sequence spans 476 residues: Glycogen synthase (476 aa).

Lys15 contacts ADP-alpha-D-glucose.

It belongs to the glycosyltransferase 1 family. Bacterial/plant glycogen synthase subfamily.

The enzyme catalyses [(1-&gt;4)-alpha-D-glucosyl](n) + ADP-alpha-D-glucose = [(1-&gt;4)-alpha-D-glucosyl](n+1) + ADP + H(+). It participates in glycan biosynthesis; glycogen biosynthesis. Synthesizes alpha-1,4-glucan chains using ADP-glucose. The polypeptide is Glycogen synthase (Bacillus cereus (strain ATCC 14579 / DSM 31 / CCUG 7414 / JCM 2152 / NBRC 15305 / NCIMB 9373 / NCTC 2599 / NRRL B-3711)).